A 181-amino-acid chain; its full sequence is Histone deacetylase complex subunit SAP30L-A (181 aa).

Disulfide bonds link cysteine 26/cysteine 27 and cysteine 35/cysteine 71. The segment at 26 to 74 (CCLIDGGERCPRPAGNASFSKRVQKSISQKKLKLDIDKNVRHLYICDFH) adopts an Atypical zinc-finger fold. The tract at residues 82–103 (RNKRKRKTSDDGGDSPEHETDI) is disordered. The short motif at 83 to 88 (NKRKRK) is the Nuclear localization signal (NLS) element. The interval 85–87 (RKR) is important for DNA and phosphoinositide binding.

Belongs to the SAP30 family. Interacts with components of the histone deacetylase complex sin3a, hdac1 and hdac2. Binds histones and nucleosomes.

The protein localises to the nucleus. It localises to the nucleolus. Functionally, functions as a transcription repressor, probably via its interaction with histone deacetylase complexes. Involved in the functional recruitment of the class 1 Sin3-histone deacetylase complex (HDAC) to the nucleolus. Binds DNA, apparently without sequence-specificity, and bends bound double-stranded DNA. Binds phosphoinositol phosphates (phosphoinositol 3-phosphate, phosphoinositol 4-phosphate and phosphoinositol 5-phosphate) via the same basic sequence motif that mediates DNA binding and nuclear import. In Xenopus laevis (African clawed frog), this protein is Histone deacetylase complex subunit SAP30L-A (sap30l-a).